We begin with the raw amino-acid sequence, 318 residues long: Methionyl-tRNA formyltransferase (318 aa).

110-113 lines the (6S)-5,6,7,8-tetrahydrofolate pocket; that stretch reads SLLP.

The protein belongs to the Fmt family.

The catalysed reaction is L-methionyl-tRNA(fMet) + (6R)-10-formyltetrahydrofolate = N-formyl-L-methionyl-tRNA(fMet) + (6S)-5,6,7,8-tetrahydrofolate + H(+). Functionally, attaches a formyl group to the free amino group of methionyl-tRNA(fMet). The formyl group appears to play a dual role in the initiator identity of N-formylmethionyl-tRNA by promoting its recognition by IF2 and preventing the misappropriation of this tRNA by the elongation apparatus. This Latilactobacillus sakei subsp. sakei (strain 23K) (Lactobacillus sakei subsp. sakei) protein is Methionyl-tRNA formyltransferase.